We begin with the raw amino-acid sequence, 612 residues long: MADVALRITETVARLQKELKCGICCSTYKDPILSTCFHIFCRSCINACFERKRKVQCPICRSVLDKRSCRDTYQITMAVQNYLKLSEAFKKDIENMNTFKSLPPEKMFMESQMPLDITIIPENDGKRCAPDFAIPFLPVRRKRPSRPQPPSAFAEEPAEPVEPPEPATKQPVELQSRVFPLEKLKKDVETSTETYKISREELKNVDIEEYINTLRENSTEIDEIDALFQLMPTMRQFLRNNINQLMEKFHVAPPKKSEKPANRRVSFASSQDLENIKIMTASESLETPPEPIQKLAQKPEVFKSTQNLIDLNLNTAVKKPVVVASDDDEVVEDSEGELQIDEDDLANVTCATSSTTLDADRTPKAIQDDEDRIDDELSQVPKTIVCSRIHNDADEVVGLELLSDFYHKFLSNACRFAEDVNEHTTHLVMMNSEGRSISQKSTAYLYAIARKCVIVGRQWLVDCITTGLLLSEADYTITSCSSTIPVKIPPSIGSEMGWLRSRNDEHGKLFAGRRFMILRKFTMNPYFDYKQLIELVQQCGGEILSCYENLSPEKLYIIFSKHSKAIEESKNIENLYKCDVVTMEWVLDSISEYLILPTQPYKAVDSIGCLQD.

The segment at cysteine 21–arginine 61 adopts an RING-type zinc-finger fold. The segment at arginine 140–glutamate 173 is disordered. 2 BRCT domains span residues arginine 415 to isoleucine 477 and glutamate 505 to alanine 603.

In terms of assembly, heterodimer (via RING-type zinc finger) with brd-1 to form the core CeBCD complex. Brc-1-brd-1 heterodimer-containing CeBCD complexes bound to chromatin are activated as an E3-ubiquitin ligase in response to DNA damage. The heterodimer interacts with the recombinase rad-51 following ionizing irradiation; the interaction is direct. The heterodimer interacts the E2-ubiquitin-conjugating enzyme let-70 following ionizing irradiation. The heterodimer interacts with the pro-crossover proteins msh-5 and syp-3. Post-translationally, phosphorylation of CeBCD complexes is required for E3 ubiquitin-protein ligase activity.

The protein localises to the nucleus. Its subcellular location is the chromosome. It is found in the cytoplasm. The catalysed reaction is S-ubiquitinyl-[E2 ubiquitin-conjugating enzyme]-L-cysteine + [acceptor protein]-L-lysine = [E2 ubiquitin-conjugating enzyme]-L-cysteine + N(6)-ubiquitinyl-[acceptor protein]-L-lysine.. The protein operates within protein modification; protein ubiquitination. E3 ubiquitin-protein ligase activity of CeBCD complexes occurs at DNA damage sites. Following DNA damage, E3 ubiquitin-protein ligase activity is reduced by caffeine treatment (inhibitor of ATM and ATK kinase activity). E3 ubiquitin-protein ligase that specifically mediates the formation of polyubiquitin chains and plays a central role in DNA repair. Plays a role in triggering cellular responses at damage sites in response to DNA damage that may be induced by UV and ionizing radiation for example. Functions in double-strand break repair, and is required for homologous recombination between sister chromatids in meiotic and mitotic cells. In particular, protects against chromosome non-disjunction and nuclear fragmentation during meiotic double-strand break repair to ensure sister chromatid recombination and aid chromosome stability. Required for normal cell cycle progression. Along with brap-2 modulates the expression of cell cycle arrest protein cki-1 in response to increased levels of reactive oxygen species. Constituent of the CeBCD complex that possesses E3 ubiquitin-protein ligase activity. When bound to chromatin, the brc-1-brd-1 heterodimer within the CeBCD complex is inactive during normal conditions, but in response to DNA damage, the brc-1-brd-1 heterodimer associates with other proteins such as the recombinase rad-51 or the E2-ubiquitin-conjugating enzyme let-70, which activate the CeBCD complex as an E3-ubiquitin ligase. Moreover, association between the brc-1-brd-1 heterodimer and rad-51 and let-70, probably requires DNA checkpoint proteins such as atl-1 and mre-11 in order to induce ubiquitination at DNA damage sites. To this end, the brc-1-brd-1 heterodimer coordinates a diverse range of cellular pathways such as DNA damage repair, ubiquitination and transcriptional regulation to maintain genomic stability. The polypeptide is Breast cancer type 1 susceptibility protein homolog (Caenorhabditis elegans).